We begin with the raw amino-acid sequence, 269 residues long: NAD kinase (269 aa).

The Proton acceptor role is filled by aspartate 45. Residues 45-46 (DG), 121-122 (NE), arginine 147, aspartate 149, 160-165 (TAYNRS), and alanine 184 each bind NAD(+).

Belongs to the NAD kinase family. A divalent metal cation is required as a cofactor.

The protein resides in the cytoplasm. It catalyses the reaction NAD(+) + ATP = ADP + NADP(+) + H(+). In terms of biological role, involved in the regulation of the intracellular balance of NAD and NADP, and is a key enzyme in the biosynthesis of NADP. Catalyzes specifically the phosphorylation on 2'-hydroxyl of the adenosine moiety of NAD to yield NADP. The polypeptide is NAD kinase (Pediococcus pentosaceus (strain ATCC 25745 / CCUG 21536 / LMG 10740 / 183-1w)).